A 77-amino-acid chain; its full sequence is Small ribosomal subunit protein bS21 (77 aa).

Basic and acidic residues predominate over residues 38–52; sequence KPSEKRAREKAEAIR. Positions 38–77 are disordered; it reads KPSEKRAREKAEAIRRTRKLARKRAQREGIVSNGRTASVR. Basic residues predominate over residues 53-62; that stretch reads RTRKLARKRA.

It belongs to the bacterial ribosomal protein bS21 family.

This is Small ribosomal subunit protein bS21 from Bartonella bacilliformis (strain ATCC 35685 / KC583 / Herrer 020/F12,63).